The chain runs to 297 residues: Thiosulfate sulfurtransferase (297 aa).

Lys-14 is modified (N6-acetyllysine; alternate). Lys-14 carries the post-translational modification N6-succinyllysine; alternate. Residues Leu-25–Ser-143 form the Rhodanese 1 domain. An O-linked (GlcNAc) serine glycan is attached at Ser-35. The residue at position 38 (Ser-38) is a Phosphoserine. Position 136 is an N6-acetyllysine; alternate (Lys-136). Lys-136 carries the N6-succinyllysine; alternate modification. The hinge stretch occupies residues Glu-144 to Leu-159. Lys-163 is modified (N6-acetyllysine). The Rhodanese 2 domain occupies Gln-173 to Arg-288. Lys-175 bears the N6-acetyllysine; alternate mark. Lys-175 carries the post-translational modification N6-succinyllysine; alternate. Arg-187 contacts substrate. An N6-acetyllysine; alternate mark is found at Lys-219 and Lys-224. 2 positions are modified to N6-succinyllysine; alternate: Lys-219 and Lys-224. At Lys-236 the chain carries N6-acetyllysine. Lys-237 is modified (N6-acetyllysine; alternate). Lys-237 bears the N6-succinyllysine; alternate mark. The active-site Cysteine persulfide intermediate is the Cys-248. Residue Lys-250 participates in substrate binding.

Monomer. As to expression, expressed in numerous tissues.

The protein localises to the mitochondrion matrix. It catalyses the reaction thiosulfate + hydrogen cyanide = thiocyanate + sulfite + 2 H(+). In terms of biological role, together with MRPL18, acts as a mitochondrial import factor for the cytosolic 5S rRNA. Only the nascent unfolded cytoplasmic form is able to bind to the 5S rRNA. Formation of iron-sulfur complexes and cyanide detoxification. The protein is Thiosulfate sulfurtransferase (Tst) of Mus musculus (Mouse).